Here is a 195-residue protein sequence, read N- to C-terminus: Molybdenum cofactor guanylyltransferase (195 aa).

Residues 10–12 (LAG), K23, N51, D69, and D99 contribute to the GTP site. Residue D99 coordinates Mg(2+).

Belongs to the MobA family. In terms of assembly, monomer. Requires Mg(2+) as cofactor.

Its subcellular location is the cytoplasm. The catalysed reaction is Mo-molybdopterin + GTP + H(+) = Mo-molybdopterin guanine dinucleotide + diphosphate. Its function is as follows. Transfers a GMP moiety from GTP to Mo-molybdopterin (Mo-MPT) cofactor (Moco or molybdenum cofactor) to form Mo-molybdopterin guanine dinucleotide (Mo-MGD) cofactor. This chain is Molybdenum cofactor guanylyltransferase, found in Yersinia pestis bv. Antiqua (strain Antiqua).